Consider the following 406-residue polypeptide: Tryptophan synthase beta chain (406 aa).

K99 bears the N6-(pyridoxal phosphate)lysine mark.

It belongs to the TrpB family. Tetramer of two alpha and two beta chains. It depends on pyridoxal 5'-phosphate as a cofactor.

The enzyme catalyses (1S,2R)-1-C-(indol-3-yl)glycerol 3-phosphate + L-serine = D-glyceraldehyde 3-phosphate + L-tryptophan + H2O. The protein operates within amino-acid biosynthesis; L-tryptophan biosynthesis; L-tryptophan from chorismate: step 5/5. Its function is as follows. The beta subunit is responsible for the synthesis of L-tryptophan from indole and L-serine. The chain is Tryptophan synthase beta chain from Brucella melitensis biotype 2 (strain ATCC 23457).